Reading from the N-terminus, the 698-residue chain is Serotransferrin (698 aa).

An N-terminal signal peptide occupies residues 1–19 (MRLAVGALLVCAVLGLCLA). Transferrin-like domains lie at 25 to 347 (VRWC…NLRE) and 361 to 683 (VKWC…NLRK). 2 cysteine pairs are disulfide-bonded: cysteine 28–cysteine 67 and cysteine 38–cysteine 58. Arginine 42 bears the Dimethylated arginine mark. A glycan (O-linked (GalNAc...) serine) is linked at serine 51. Residues aspartate 82 and tyrosine 114 each contribute to the Fe(3+) site. Disulfide bonds link cysteine 137–cysteine 213, cysteine 156–cysteine 350, cysteine 177–cysteine 193, cysteine 180–cysteine 198, cysteine 190–cysteine 196, cysteine 246–cysteine 260, cysteine 358–cysteine 615, cysteine 364–cysteine 396, cysteine 374–cysteine 387, cysteine 421–cysteine 693, cysteine 437–cysteine 656, cysteine 469–cysteine 542, cysteine 493–cysteine 684, cysteine 503–cysteine 517, cysteine 514–cysteine 525, cysteine 582–cysteine 596, and cysteine 634–cysteine 639. Hydrogencarbonate is bound by residues threonine 139, arginine 143, alanine 145, and glycine 146. Tyrosine 207 lines the Fe(3+) pocket. Position 268 (histidine 268) interacts with Fe(3+). Serine 389 bears the Phosphoserine; by FAM20C mark. Aspartate 411 lines the Fe(3+) pocket. Asparagine 432 carries an N-linked (GlcNAc...) (complex) asparagine glycan. Tyrosine 445 serves as a coordination point for Fe(3+). Hydrogencarbonate-binding residues include threonine 471, arginine 475, alanine 477, and glycine 478. Asparagine 491 carries N-linked (GlcNAc...) asparagine; atypical; partial glycosylation. Residue tyrosine 536 participates in Fe(3+) binding. Histidine 604 contacts Fe(3+). N-linked (GlcNAc...) (complex) asparagine glycosylation is present at asparagine 630. Position 685 is a phosphoserine; by FAM20C (serine 685).

Belongs to the transferrin family. In terms of assembly, monomer. Part of a complex composed of SLC40A1/ferroportin, TF/transferrin and HEPH/hephaestin that transfers iron from cells to transferrin. As to quaternary structure, (Microbial infection) Binds to Neisseria transferrin-binding protein A (tbpA or tbp1). Forms a large complex with TbpA and TbpB. (Microbial infection) Binds to Neisseria transferrin-binding protein B (tbpb or tbp2). In terms of tissue distribution, expressed by the liver and secreted in plasma.

It is found in the secreted. Functionally, transferrins are iron binding transport proteins which can bind two Fe(3+) ions in association with the binding of an anion, usually bicarbonate. It is responsible for the transport of iron from sites of absorption and heme degradation to those of storage and utilization. Serum transferrin may also have a further role in stimulating cell proliferation. (Microbial infection) Serves as an iron source for Neisseria species, which capture the protein and extract its iron for their own use. Its function is as follows. (Microbial infection) Serves as an iron source for parasite T.brucei (strain 427), which capture TF via its own transferrin receptor ESAG6:ESAG7 and extract its iron for its own use. This chain is Serotransferrin, found in Homo sapiens (Human).